Here is a 210-residue protein sequence, read N- to C-terminus: Large ribosomal subunit protein bL25 (210 aa).

The tract at residues 179–210 is disordered; that stretch reads LPPQQEEEIHSGEQQEPGQPEAEEGRETTPEG. Over residues 201-210 the composition is skewed to basic and acidic residues; it reads EEGRETTPEG.

The protein belongs to the bacterial ribosomal protein bL25 family. CTC subfamily. As to quaternary structure, part of the 50S ribosomal subunit; part of the 5S rRNA/L5/L18/L25 subcomplex. Contacts the 5S rRNA. Binds to the 5S rRNA independently of L5 and L18.

This is one of the proteins that binds to the 5S RNA in the ribosome where it forms part of the central protuberance. The sequence is that of Large ribosomal subunit protein bL25 from Geobacillus thermodenitrificans (strain NG80-2).